The primary structure comprises 196 residues: DnaA initiator-associating protein DiaA (196 aa).

Residues 34–196 (LVQSLLNGNK…DNTLFPHQDD (163 aa)) form the SIS domain.

The protein belongs to the SIS family. DiaA subfamily. Homotetramer; dimer of dimers.

Functionally, required for the timely initiation of chromosomal replication via direct interactions with the DnaA initiator protein. The chain is DnaA initiator-associating protein DiaA from Klebsiella pneumoniae (strain 342).